The sequence spans 117 residues: Large ribosomal subunit protein uL18 (117 aa).

It belongs to the universal ribosomal protein uL18 family. In terms of assembly, part of the 50S ribosomal subunit; part of the 5S rRNA/L5/L18/L25 subcomplex. Contacts the 5S and 23S rRNAs.

Its function is as follows. This is one of the proteins that bind and probably mediate the attachment of the 5S RNA into the large ribosomal subunit, where it forms part of the central protuberance. The sequence is that of Large ribosomal subunit protein uL18 from Photobacterium profundum (strain SS9).